The chain runs to 335 residues: Phospho-N-acetylmuramoyl-pentapeptide-transferase (335 aa).

The next 10 membrane-spanning stretches (helical) occupy residues 5-25 (IFLA…LMIP), 50-70 (TPTM…LIMA), 78-98 (MVMV…DDFI), 114-133 (LIGQ…RYLG), 145-165 (IHLE…VGIT), 177-197 (LAAG…TLAA), 200-220 (GGGV…AAAV), 236-256 (VFMG…LAVL), 262-282 (ILLI…LQVF), and 311-331 (VVMV…IAYM).

It belongs to the glycosyltransferase 4 family. MraY subfamily. Mg(2+) is required as a cofactor.

It is found in the cell membrane. The enzyme catalyses UDP-N-acetyl-alpha-D-muramoyl-L-alanyl-gamma-D-glutamyl-meso-2,6-diaminopimeloyl-D-alanyl-D-alanine + di-trans,octa-cis-undecaprenyl phosphate = di-trans,octa-cis-undecaprenyl diphospho-N-acetyl-alpha-D-muramoyl-L-alanyl-D-glutamyl-meso-2,6-diaminopimeloyl-D-alanyl-D-alanine + UMP. It participates in cell wall biogenesis; peptidoglycan biosynthesis. Functionally, catalyzes the initial step of the lipid cycle reactions in the biosynthesis of the cell wall peptidoglycan: transfers peptidoglycan precursor phospho-MurNAc-pentapeptide from UDP-MurNAc-pentapeptide onto the lipid carrier undecaprenyl phosphate, yielding undecaprenyl-pyrophosphoryl-MurNAc-pentapeptide, known as lipid I. This chain is Phospho-N-acetylmuramoyl-pentapeptide-transferase, found in Desulfitobacterium hafniense (strain DSM 10664 / DCB-2).